The sequence spans 489 residues: MIKLFNTLSKRVEVFKPIDDVVKIYCCGVTVYDLCHLGHARSYIAWDVLRRFLIYSDFKVKYVQNFTDIDDKILKRAKEESSSMKEVSEKNIIEFHKDMDSLGIMRPDSMPRATNHICNICSFITILEDKGYAYSRDGDVYYSVFKNKNYGKLSNQNIQEQNINKQGRMANEENNKKQNPQDFALWKKAKNDEPFFDSPWGRGRPGWHIECSAMVKDELGDTIDIHLGGSDLIFPHHENEIAQSEAANGKKLANYWLHNGMVNVNGQKMSKSLKNFKTIRELIKSGISPMTLRYFVMTVNYRKPLDFTEEALRSAAEAWKNINLALSFMDLTKGAFRSIDKNESIEEEYKEKLSFELSQKKLKFSEALGNDLNTAGAIAIIYDLAKPLKNFLNQFQRIEGLKIDLNEKFFLLENFKTLEKLTEVLGLKKEVLVKERKITEEEISSLINERLKAKKGKNYAKADEIRNLLKEKGIELIDQSKEITTWIRV.

Cys27 serves as a coordination point for Zn(2+). The 'HIGH' region signature appears at 29–39 (VTVYDLCHLGH). Zn(2+) is bound by residues Cys211, His236, and Glu240. The 'KMSKS' region signature appears at 268–272 (KMSKS). ATP is bound at residue Lys271.

The protein belongs to the class-I aminoacyl-tRNA synthetase family. As to quaternary structure, monomer. It depends on Zn(2+) as a cofactor.

Its subcellular location is the cytoplasm. The enzyme catalyses tRNA(Cys) + L-cysteine + ATP = L-cysteinyl-tRNA(Cys) + AMP + diphosphate. The polypeptide is Cysteine--tRNA ligase (Prochlorococcus marinus (strain MIT 9312)).